The sequence spans 574 residues: Arginine--tRNA ligase (574 aa).

A 'HIGH' region motif is present at residues 124 to 134; the sequence is ANPNGPLHIGH.

This sequence belongs to the class-I aminoacyl-tRNA synthetase family.

It localises to the cytoplasm. It catalyses the reaction tRNA(Arg) + L-arginine + ATP = L-arginyl-tRNA(Arg) + AMP + diphosphate. The sequence is that of Arginine--tRNA ligase from Methanococcus aeolicus (strain ATCC BAA-1280 / DSM 17508 / OCM 812 / Nankai-3).